Here is a 128-residue protein sequence, read N- to C-terminus: Putative pre-16S rRNA nuclease (128 aa).

The protein belongs to the YqgF nuclease family.

The protein resides in the cytoplasm. In terms of biological role, could be a nuclease involved in processing of the 5'-end of pre-16S rRNA. The protein is Putative pre-16S rRNA nuclease of Sulfurovum sp. (strain NBC37-1).